A 99-amino-acid polypeptide reads, in one-letter code: MMMNILSNAKLLAHHKGGGSTTNGRNSAGRRLGAKRADGQEVHAGSIIYRQRGTKIHPGKNVGRGGDDTLFALTNGVVKFERLGKYKKQVSVLPVEDAE.

Positions 13–65 (AHHKGGGSTTNGRNSAGRRLGAKRADGQEVHAGSIIYRQRGTKIHPGKNVGRG) are disordered.

Belongs to the bacterial ribosomal protein bL27 family.

The sequence is that of Large ribosomal subunit protein bL27 from Lactobacillus delbrueckii subsp. bulgaricus (strain ATCC BAA-365 / Lb-18).